Reading from the N-terminus, the 251-residue chain is uncharacterized protein (251 aa).

7 helical membrane-spanning segments follow: residues 48–68, 88–108, 110–130, 132–152, 158–178, 184–204, and 209–229; these read WMVG…VELI, VLWG…LVAN, IPLL…FIWV, AMVW…GSSF, IGVS…GLFV, IIGC…MPVL, and GVSW…AYLL.

It to M.tuberculosis Rv1337.

The protein localises to the cell membrane. This is an uncharacterized protein from Mycobacterium leprae (strain TN).